The following is a 228-amino-acid chain: Ribulose-phosphate 3-epimerase (228 aa).

Ser12 contacts substrate. Residues His37, Asp39, and His70 each coordinate a divalent metal cation. Asp39 functions as the Proton acceptor in the catalytic mechanism. Residues His70, 146–149 (GFGG), 176–178 (DGG), and 198–199 (GS) contribute to the substrate site. An a divalent metal cation-binding site is contributed by Asp176. Asp176 functions as the Proton donor in the catalytic mechanism.

Belongs to the ribulose-phosphate 3-epimerase family. A divalent metal cation is required as a cofactor.

The catalysed reaction is D-ribulose 5-phosphate = D-xylulose 5-phosphate. It functions in the pathway carbohydrate degradation. In terms of biological role, catalyzes the reversible epimerization of D-ribulose 5-phosphate to D-xylulose 5-phosphate. The sequence is that of Ribulose-phosphate 3-epimerase from Rhodobacter capsulatus (Rhodopseudomonas capsulata).